Reading from the N-terminus, the 256-residue chain is Small ribosomal subunit protein eS1 (256 aa).

Ala-2 bears the N-acetylalanine; partial mark.

It belongs to the eukaryotic ribosomal protein eS1 family. In terms of assembly, component of the small ribosomal subunit. Mature ribosomes consist of a small (40S) and a large (60S) subunit. The 40S subunit contains about 33 different proteins and 1 molecule of RNA (18S). The 60S subunit contains about 49 different proteins and 3 molecules of RNA (25S, 5.8S and 5S).

The protein localises to the cytoplasm. The sequence is that of Small ribosomal subunit protein eS1 from Lentinula edodes (Shiitake mushroom).